The chain runs to 138 residues: MTEEKIQSYRKKIYVIRQKLKAKKPRFLRYDSDKFFRLGRQEKWRRPYGRDNKTRLKVRGFPAIVSVGYRLPKEVRGFHPSGLRQVIVHNVNDLVKVQNQKDSVIVTIASSVGFKKRLEILNKARELGLKVSNEGVSA.

This sequence belongs to the eukaryotic ribosomal protein eL32 family.

The polypeptide is Large ribosomal subunit protein eL32 (Saccharolobus islandicus (strain Y.N.15.51 / Yellowstone #2) (Sulfolobus islandicus)).